The primary structure comprises 203 residues: dITP/XTP pyrophosphatase (203 aa).

7–12 serves as a coordination point for substrate; that stretch reads TGNRDK. The Proton acceptor role is filled by D73. D73 is a Mg(2+) binding site. Substrate-binding positions include S74, 155–158, K178, and 183–184; these read FGYD and HR.

Belongs to the HAM1 NTPase family. Homodimer. Mg(2+) is required as a cofactor.

It carries out the reaction XTP + H2O = XMP + diphosphate + H(+). The catalysed reaction is dITP + H2O = dIMP + diphosphate + H(+). It catalyses the reaction ITP + H2O = IMP + diphosphate + H(+). In terms of biological role, pyrophosphatase that catalyzes the hydrolysis of nucleoside triphosphates to their monophosphate derivatives, with a high preference for the non-canonical purine nucleotides XTP (xanthosine triphosphate), dITP (deoxyinosine triphosphate) and ITP. Seems to function as a house-cleaning enzyme that removes non-canonical purine nucleotides from the nucleotide pool, thus preventing their incorporation into DNA/RNA and avoiding chromosomal lesions. The polypeptide is dITP/XTP pyrophosphatase (Wolinella succinogenes (strain ATCC 29543 / DSM 1740 / CCUG 13145 / JCM 31913 / LMG 7466 / NCTC 11488 / FDC 602W) (Vibrio succinogenes)).